Reading from the N-terminus, the 232-residue chain is Ion-translocating oxidoreductase complex subunit E (232 aa).

A run of 5 helical transmembrane segments spans residues 39–59 (LGLG…ISLV), 69–89 (IPVF…LVNA), 93–113 (GLYM…IIIG), 128–148 (AFDG…LGAT), and 182–202 (SFLL…LIAL).

It belongs to the NqrDE/RnfAE family. The complex is composed of six subunits: RnfA, RnfB, RnfC, RnfD, RnfE and RnfG.

It is found in the cell inner membrane. Its function is as follows. Part of a membrane-bound complex that couples electron transfer with translocation of ions across the membrane. This chain is Ion-translocating oxidoreductase complex subunit E, found in Shewanella oneidensis (strain ATCC 700550 / JCM 31522 / CIP 106686 / LMG 19005 / NCIMB 14063 / MR-1).